Reading from the N-terminus, the 298-residue chain is N-acetylmuramic acid 6-phosphate etherase (298 aa).

An SIS domain is found at 55 to 218 (IHAQVSGGGR…STGLMIKSGK (164 aa)). The Proton donor role is filled by Glu83. Glu114 is an active-site residue.

This sequence belongs to the GCKR-like family. MurNAc-6-P etherase subfamily. In terms of assembly, homodimer.

The enzyme catalyses N-acetyl-D-muramate 6-phosphate + H2O = N-acetyl-D-glucosamine 6-phosphate + (R)-lactate. It participates in amino-sugar metabolism; 1,6-anhydro-N-acetylmuramate degradation. Its pathway is amino-sugar metabolism; N-acetylmuramate degradation. It functions in the pathway cell wall biogenesis; peptidoglycan recycling. Functionally, specifically catalyzes the cleavage of the D-lactyl ether substituent of MurNAc 6-phosphate, producing GlcNAc 6-phosphate and D-lactate. Together with AnmK, is also required for the utilization of anhydro-N-acetylmuramic acid (anhMurNAc) either imported from the medium or derived from its own cell wall murein, and thus plays a role in cell wall recycling. The protein is N-acetylmuramic acid 6-phosphate etherase of Shigella dysenteriae serotype 1 (strain Sd197).